Here is a 413-residue protein sequence, read N- to C-terminus: uncharacterized protein (413 aa).

Transmembrane regions (helical) follow at residues glycine 10–proline 32, valine 162–leucine 184, leucine 189–valine 211, leucine 232–phenylalanine 254, tyrosine 259–valine 276, alanine 288–threonine 310, and phenylalanine 325–leucine 347.

The protein localises to the cell membrane. This is an uncharacterized protein from Aquifex aeolicus (strain VF5).